The following is a 260-amino-acid chain: tRNA pseudouridine synthase A (260 aa).

Residue Asp52 is the Nucleophile of the active site. Tyr111 is a binding site for substrate.

Belongs to the tRNA pseudouridine synthase TruA family. As to quaternary structure, homodimer.

It carries out the reaction uridine(38/39/40) in tRNA = pseudouridine(38/39/40) in tRNA. In terms of biological role, formation of pseudouridine at positions 38, 39 and 40 in the anticodon stem and loop of transfer RNAs. The protein is tRNA pseudouridine synthase A of Beijerinckia indica subsp. indica (strain ATCC 9039 / DSM 1715 / NCIMB 8712).